Here is a 300-residue protein sequence, read N- to C-terminus: Interferon-stimulated gene 20 kDa protein (300 aa).

Aspartate 11, glutamate 13, aspartate 90, and histidine 93 together coordinate Mn(2+).

This sequence belongs to the exonuclease superfamily. As to quaternary structure, associates with PML and SP100 in the PML NB complex. Associates with survival motor neuron protein (SMN)-containing macromolecular nuclear complexes and U1 and U2 snRNAs and U3 snoRNA. The cofactor is Mn(2+).

The protein resides in the nucleus. Its subcellular location is the nucleolus. The protein localises to the cytoplasm. It localises to the cajal body. It is found in the P-body. It carries out the reaction Exonucleolytic cleavage in the 3'- to 5'-direction to yield nucleoside 5'-phosphates.. Functionally, interferon-induced antiviral exoribonuclease that acts mainly on single-stranded RNA. Inhibition of several viruses does not involve the degradation of viral RNAs, but rather the inhibition of translation of viral proteins. Exerts a translational control over a large panel of non-self RNA substrates while sparing endogenous transcripts. This activity correlates with the protein's ability to localize in cytoplasmic processing bodies. May also act as master regulator of over hundred interferon stimulated genes leading to viral genome translation inhibition. May play additional roles in the maturation of snRNAs and rRNAs, and in ribosome biogenesis. The chain is Interferon-stimulated gene 20 kDa protein (Isg20) from Mus musculus (Mouse).